Here is a 704-residue protein sequence, read N- to C-terminus: Non-sulfated chondroitin lyase E66 (704 aa).

A signal peptide spans 1-23; that stretch reads MSIVLIIVIVVIFLICFLYLSNS. Active-site proton acceptor residues include Asn236 and His291. The Proton donor role is filled by Tyr299.

Belongs to the baculoviridae E66 family.

It is found in the virion membrane. The protein localises to the host nucleus. It localises to the host cytoplasm. Functionally, component of the polyhedra envelope. Plays an essential role in oral infectivity. May digest, with its chondroitin lyase activity, the chondroitin sulfate barrier of the peritrophic matrix of the host midgut to facilitate viral infection in the epithelial cells. This chain is Non-sulfated chondroitin lyase E66 (P79), found in Lepidoptera (butterflies and moths).